The following is a 290-amino-acid chain: MSWLDKLLPPKIQQTDPSTRKGIPEGLWVKCPSCESTLYRTDVEANLHVCPKCDHHMRISARARLDALLDAEGRYEIGQEIVPVDALKFKDSKKYPDRIKAAMEDTGETDAMVVMGGAIHTIPVVASCFEFEFMGGSMGSVVGERFVRGAQAALEQKVPFICFTATGGARMQESLLSLLQMAKTTAMLNQLSASKLPFISVLTDPTMGGVSASFAFLGDVVIAEPKALIGFAGPRVIEQTVREKLPEGFQRSEFLLQKGAIDMIVDRRKMRAELAQLLALLQKQPADAVA.

One can recognise a CoA carboxyltransferase N-terminal domain in the interval 27-290; sequence LWVKCPSCES…LQKQPADAVA (264 aa). Residues Cys31, Cys34, Cys50, and Cys53 each contribute to the Zn(2+) site. A C4-type zinc finger spans residues 31-53; sequence CPSCESTLYRTDVEANLHVCPKC.

It belongs to the AccD/PCCB family. In terms of assembly, acetyl-CoA carboxylase is a heterohexamer composed of biotin carboxyl carrier protein (AccB), biotin carboxylase (AccC) and two subunits each of ACCase subunit alpha (AccA) and ACCase subunit beta (AccD). Requires Zn(2+) as cofactor.

The protein resides in the cytoplasm. It carries out the reaction N(6)-carboxybiotinyl-L-lysyl-[protein] + acetyl-CoA = N(6)-biotinyl-L-lysyl-[protein] + malonyl-CoA. The protein operates within lipid metabolism; malonyl-CoA biosynthesis; malonyl-CoA from acetyl-CoA: step 1/1. Its function is as follows. Component of the acetyl coenzyme A carboxylase (ACC) complex. Biotin carboxylase (BC) catalyzes the carboxylation of biotin on its carrier protein (BCCP) and then the CO(2) group is transferred by the transcarboxylase to acetyl-CoA to form malonyl-CoA. The sequence is that of Acetyl-coenzyme A carboxylase carboxyl transferase subunit beta from Cupriavidus taiwanensis (strain DSM 17343 / BCRC 17206 / CCUG 44338 / CIP 107171 / LMG 19424 / R1) (Ralstonia taiwanensis (strain LMG 19424)).